The sequence spans 634 residues: Probable beta-glucosidase C (634 aa).

Positions 1–19 (MRIDCTVASLTALASGCQA) are cleaved as a signal peptide. Asn90, Asn112, Asn219, and Asn270 each carry an N-linked (GlcNAc...) asparagine glycan. Asp337 is a catalytic residue. Residues Asn360, Asn476, Asn484, and Asn524 are each glycosylated (N-linked (GlcNAc...) asparagine).

The protein belongs to the glycosyl hydrolase 3 family.

Its subcellular location is the secreted. The enzyme catalyses Hydrolysis of terminal, non-reducing beta-D-glucosyl residues with release of beta-D-glucose.. It functions in the pathway glycan metabolism; cellulose degradation. Beta-glucosidases are one of a number of cellulolytic enzymes involved in the degradation of cellulosic biomass. Catalyzes the last step releasing glucose from the inhibitory cellobiose. This chain is Probable beta-glucosidase C (bglC), found in Aspergillus flavus (strain ATCC 200026 / FGSC A1120 / IAM 13836 / NRRL 3357 / JCM 12722 / SRRC 167).